We begin with the raw amino-acid sequence, 467 residues long: Ribulose bisphosphate carboxylase large chain (467 aa).

At lysine 5 the chain carries N6,N6,N6-trimethyllysine. Substrate contacts are provided by asparagine 114 and threonine 164. Residue lysine 166 is the Proton acceptor of the active site. Lysine 168 contributes to the substrate binding site. Residues lysine 192, aspartate 194, and glutamate 195 each coordinate Mg(2+). Lysine 192 is modified (N6-carboxylysine). Residue histidine 285 is the Proton acceptor of the active site. Substrate contacts are provided by arginine 286, histidine 318, and serine 370.

The protein belongs to the RuBisCO large chain family. Type I subfamily. Heterohexadecamer of 8 large chains and 8 small chains; disulfide-linked. The disulfide link is formed within the large subunit homodimers. Mg(2+) serves as cofactor. In terms of processing, the disulfide bond which can form in the large chain dimeric partners within the hexadecamer appears to be associated with oxidative stress and protein turnover.

It is found in the plastid. The protein localises to the chloroplast. The catalysed reaction is 2 (2R)-3-phosphoglycerate + 2 H(+) = D-ribulose 1,5-bisphosphate + CO2 + H2O. It carries out the reaction D-ribulose 1,5-bisphosphate + O2 = 2-phosphoglycolate + (2R)-3-phosphoglycerate + 2 H(+). Its function is as follows. RuBisCO catalyzes two reactions: the carboxylation of D-ribulose 1,5-bisphosphate, the primary event in carbon dioxide fixation, as well as the oxidative fragmentation of the pentose substrate in the photorespiration process. Both reactions occur simultaneously and in competition at the same active site. The protein is Ribulose bisphosphate carboxylase large chain of Scutellaria bolanderi (Sierra skullcap).